A 225-amino-acid chain; its full sequence is Uracil-DNA glycosylase 1 (225 aa).

Catalysis depends on Asp-68, which acts as the Proton acceptor.

It belongs to the uracil-DNA glycosylase (UDG) superfamily. UNG family.

It is found in the cytoplasm. It carries out the reaction Hydrolyzes single-stranded DNA or mismatched double-stranded DNA and polynucleotides, releasing free uracil.. Its function is as follows. Excises uracil residues from the DNA which can arise as a result of misincorporation of dUMP residues by DNA polymerase or due to deamination of cytosine. This chain is Uracil-DNA glycosylase 1 (ung1), found in Streptomyces avermitilis (strain ATCC 31267 / DSM 46492 / JCM 5070 / NBRC 14893 / NCIMB 12804 / NRRL 8165 / MA-4680).